Consider the following 207-residue polypeptide: MIQKYSSRLLEKAIDQFATLPGVGRKTALRLALYLLRQPVENTRQFAAALVDLREHISYCRHCHNISDSDVCTICADPTRDQSTLCVVENIRDVMAIENTSQYRGLYHVLGGVISPMDGIGPGDLQIDSLVHRVASEQIHEVILALSTTMEGDTTNFFLFRKLEPTGVRVSVIARGIAIGDEIEYADEITLGRSILNRTDFSDSVKF.

A C4-type zinc finger spans residues 60 to 75 (CRHCHNISDSDVCTIC). The Toprim domain occupies 83 to 178 (STLCVVENIR…RVSVIARGIA (96 aa)).

It belongs to the RecR family.

Functionally, may play a role in DNA repair. It seems to be involved in an RecBC-independent recombinational process of DNA repair. It may act with RecF and RecO. The sequence is that of Recombination protein RecR from Porphyromonas gingivalis (strain ATCC BAA-308 / W83).